The primary structure comprises 644 residues: Neurofilament medium polypeptide (644 aa).

The tract at residues 1-33 (VKVELDKKVQSLQDEVAFLRTNHEEEVADLLAQ) is coil 1B. Residues 1–197 (VKVELDKKVQ…KLLEGEETRF (197 aa)) enclose the IF rod domain. At serine 11 the chain carries Phosphoserine. The linker 12 stretch occupies residues 34 to 50 (IQASHITVERKDYLKTD). Residues 51–72 (ISSALKEIRSQLECHSDQNMHQ) form a coil 2A region. Residues 73–76 (AEEW) form a linker 2 region. The segment at 77-197 (FKCRYAKLTE…KLLEGEETRF (121 aa)) is coil 2B. Position 105 is a phosphotyrosine (tyrosine 105). A phosphoserine mark is found at serine 131, serine 203, and serine 215. Residues 198–643 (STFSGSITGP…HAIVKEVTQS (446 aa)) are tail. A glycan (O-linked (GlcNAc) threonine) is linked at threonine 217. Residues serine 253 and serine 269 each carry the phosphoserine modification. The tract at residues 270 to 582 (VKEEEKEEEA…GGDRSEEKVV (313 aa)) is disordered. A compositionally biased stretch (acidic residues) spans 274 to 292 (EKEEEAEGKEEEQEAEEEV). Serine 298 carries the phosphoserine modification. The span at 308-328 (KEEEGEKEEEGQEEEEEEEDE) shows a compositional bias: acidic residues. Positions 329–350 (GVKSDQAEEGGSEKEGSSKNEG) are enriched in basic and acidic residues. A phosphoserine mark is found at serine 332, serine 340, serine 345, and serine 346. The segment covering 351 to 368 (EQEEGETEAEGEVEEAEA) has biased composition (acidic residues). Residue threonine 357 is modified to Phosphothreonine. Residues 369–400 (KEEKKTEEKSEEVAAKEEPVTEAKVGKPEKAK) are compositionally biased toward basic and acidic residues. Phosphoserine occurs at positions 401, 406, 442, and 465. Over residues 422 to 470 (GEQKEEEEKVEEEKKKAAKESPKEEKVEKKEEKPKDVPKKKAESPVKEE) the composition is skewed to basic and acidic residues. A compositionally biased stretch (low complexity) spans 474 to 483 (EAATITKPTK). Residues 485 to 508 (GLEKETKEGEKPLQQEKEKEKAGE) are compositionally biased toward basic and acidic residues. Phosphoserine is present on residues serine 512, serine 550, and serine 566. The segment covering 545-557 (TKEKGSGREEEKG) has biased composition (basic and acidic residues). Basic and acidic residues predominate over residues 568 to 582 (ADEKKGGDRSEEKVV).

The protein belongs to the intermediate filament family. In terms of assembly, forms heterodimers with NEFL; which can further hetero-oligomerize (in vitro). Forms heterodimers with INA (in vitro). Post-translationally, there are a number of repeats of the tripeptide K-S-P, NFM is phosphorylated on a number of the serines in this motif. It is thought that phosphorylation of NFM results in the formation of interfilament cross bridges that are important in the maintenance of axonal caliber. Phosphorylation seems to play a major role in the functioning of the larger neurofilament polypeptides (NF-M and NF-H), the levels of phosphorylation being altered developmentally and coincidentally with a change in the neurofilament function. In terms of processing, phosphorylated in the head and rod regions by the PKC kinase PKN1, leading to the inhibition of polymerization.

The protein localises to the cytoplasm. It is found in the cytoskeleton. The protein resides in the cell projection. It localises to the axon. In terms of biological role, neurofilaments usually contain three intermediate filament proteins: NEFL, NEFM, and NEFH which are involved in the maintenance of neuronal caliber. May additionally cooperate with the neuronal intermediate filament proteins PRPH and INA to form neuronal filamentous networks. This chain is Neurofilament medium polypeptide (NEFM), found in Oryctolagus cuniculus (Rabbit).